An 831-amino-acid polypeptide reads, in one-letter code: DNA replication licensing factor MCM6 (831 aa).

Residues 155 to 182 (CLDCGSVIKNVEQQFKYTQPTICVSPTC) form a C4-type zinc finger. Residues 258-278 (GERAECRRDSSQQKSSTAGHE) form a disordered region. Over residues 259–268 (ERAECRRDSS) the composition is skewed to basic and acidic residues. The 207-residue stretch at 345-551 (YFNKLVGSMA…VTDYHIAHHI (207 aa)) folds into the MCM domain. Position 395–402 (395–402 (GDPSCAKS)) interacts with ATP. The Arginine finger signature appears at 527 to 530 (SRFD). The tract at residues 666–705 (SEYQDANGDNMDDTDDIENPVDGEEDQQNGAAEPASATAD) is disordered. Residues 675-692 (NMDDTDDIENPVDGEEDQ) show a composition bias toward acidic residues.

This sequence belongs to the MCM family. As to quaternary structure, component of the minichromosome maintenance (MCM) complex, a heterotetramer composed of MCM2, MCM3, MCM4, MCM5, MCM6 and MCM7. Interacts with ETG1. Expressed in shoot apex and flower buds.

It is found in the nucleus. The enzyme catalyses ATP + H2O = ADP + phosphate + H(+). Its function is as follows. Probable component of the MCM2-7 complex (MCM complex) that may function as a DNA helicase and which is essential to undergo a single round of replication initiation and elongation per cell cycle in eukaryotic cells. The chain is DNA replication licensing factor MCM6 (MCM6) from Arabidopsis thaliana (Mouse-ear cress).